The following is a 441-amino-acid chain: Glutamyl-tRNA reductase (441 aa).

Substrate is bound by residues 64-67, serine 123, 128-130, and glutamine 134; these read TCNR and ETQ. Cysteine 65 acts as the Nucleophile in catalysis. NADP(+) is bound at residue 203-208; it reads GAGEMI.

Belongs to the glutamyl-tRNA reductase family. In terms of assembly, homodimer.

It catalyses the reaction (S)-4-amino-5-oxopentanoate + tRNA(Glu) + NADP(+) = L-glutamyl-tRNA(Glu) + NADPH + H(+). It functions in the pathway porphyrin-containing compound metabolism; protoporphyrin-IX biosynthesis; 5-aminolevulinate from L-glutamyl-tRNA(Glu): step 1/2. Its function is as follows. Catalyzes the NADPH-dependent reduction of glutamyl-tRNA(Glu) to glutamate 1-semialdehyde (GSA). This chain is Glutamyl-tRNA reductase, found in Burkholderia pseudomallei (strain K96243).